A 722-amino-acid chain; its full sequence is Polyribonucleotide nucleotidyltransferase (722 aa).

Asp-495 and Asp-501 together coordinate Mg(2+). In terms of domain architecture, KH spans 562 to 621 (PRLLSFRIDPELIGTVIGPGGRTIKGITERTNTKIDIEDGGIVTIASHDGVAAEEAQKII). In terms of domain architecture, S1 motif spans 631-699 (GEVFTGSITR…NRGRINLTLR (69 aa)).

It belongs to the polyribonucleotide nucleotidyltransferase family. It depends on Mg(2+) as a cofactor.

The protein localises to the cytoplasm. It carries out the reaction RNA(n+1) + phosphate = RNA(n) + a ribonucleoside 5'-diphosphate. In terms of biological role, involved in mRNA degradation. Catalyzes the phosphorolysis of single-stranded polyribonucleotides processively in the 3'- to 5'-direction. This chain is Polyribonucleotide nucleotidyltransferase, found in Prochlorococcus marinus (strain SARG / CCMP1375 / SS120).